Here is a 341-residue protein sequence, read N- to C-terminus: LIM and senescent cell antigen-like-containing domain protein 2 (341 aa).

LIM zinc-binding domains are found at residues 13–74 (AMCQ…LFAP), 76–133 (CGFC…EKAK), 138–195 (FICQ…KMGI), 196–255 (PICG…LFGD), and 256–315 (VCYN…FPLE). Serine 328 carries the post-translational modification Phosphoserine.

In terms of assembly, interacts with integrin-linked protein kinase 1 (ILK) via the first LIM domain, and in competition with LIMS1. Part of the heterotrimeric IPP complex composed of integrin-linked kinase (ILK), LIMS1 or LIMS2, and PARVA. Interacts with TGFB1I1. In terms of tissue distribution, detected in heart, lung, kidney, liver, urinary bladder, fat, skin, skeletal muscle, uterus, large intestine and testis.

Its subcellular location is the cell junction. The protein localises to the focal adhesion. The protein resides in the cell membrane. In terms of biological role, adapter protein in a cytoplasmic complex linking beta-integrins to the actin cytoskeleton, bridges the complex to cell surface receptor tyrosine kinases and growth factor receptors. The chain is LIM and senescent cell antigen-like-containing domain protein 2 (Lims2) from Mus musculus (Mouse).